The primary structure comprises 372 residues: Queuine tRNA-ribosyltransferase (372 aa).

Asp89 (proton acceptor) is an active-site residue. Residues 89-93 (DSGGF), Asp143, Gln185, and Gly212 each bind substrate. Positions 243–249 (GVGKPED) are RNA binding. Residue Asp262 is the Nucleophile of the active site. The interval 267 to 271 (TRNAR) is RNA binding; important for wobble base 34 recognition. Residues Cys300, Cys302, Cys305, and His331 each coordinate Zn(2+).

It belongs to the queuine tRNA-ribosyltransferase family. As to quaternary structure, homodimer. Within each dimer, one monomer is responsible for RNA recognition and catalysis, while the other monomer binds to the replacement base PreQ1. The cofactor is Zn(2+).

It catalyses the reaction 7-aminomethyl-7-carbaguanine + guanosine(34) in tRNA = 7-aminomethyl-7-carbaguanosine(34) in tRNA + guanine. Its pathway is tRNA modification; tRNA-queuosine biosynthesis. Its function is as follows. Catalyzes the base-exchange of a guanine (G) residue with the queuine precursor 7-aminomethyl-7-deazaguanine (PreQ1) at position 34 (anticodon wobble position) in tRNAs with GU(N) anticodons (tRNA-Asp, -Asn, -His and -Tyr). Catalysis occurs through a double-displacement mechanism. The nucleophile active site attacks the C1' of nucleotide 34 to detach the guanine base from the RNA, forming a covalent enzyme-RNA intermediate. The proton acceptor active site deprotonates the incoming PreQ1, allowing a nucleophilic attack on the C1' of the ribose to form the product. After dissociation, two additional enzymatic reactions on the tRNA convert PreQ1 to queuine (Q), resulting in the hypermodified nucleoside queuosine (7-(((4,5-cis-dihydroxy-2-cyclopenten-1-yl)amino)methyl)-7-deazaguanosine). The protein is Queuine tRNA-ribosyltransferase of Chromohalobacter salexigens (strain ATCC BAA-138 / DSM 3043 / CIP 106854 / NCIMB 13768 / 1H11).